Reading from the N-terminus, the 33-residue chain is LTCLNCPEMFCGKFQICRNGEKICFKKLHQRRP.

Intrachain disulfides connect Cys3–Cys24 and Cys6–Cys11.

In terms of tissue distribution, expressed by the venom gland.

The protein localises to the secreted. Functionally, possible voltage-gated potassium channel (Kv) blocker. Decreases amplitude of compound action potential and conduction velocity in toad sciatic nerve. Has only mild anticoagulant activity even at a concentration of 5ug/ml. Shows no cytotoxicity towards human cell lines. This Naja kaouthia (Monocled cobra) protein is Neurotoxin Nk-3FTx.